Consider the following 174-residue polypeptide: Crossover junction endodeoxyribonuclease RuvC (174 aa).

Catalysis depends on residues D8, E67, and D139. Residues D8, E67, and D139 each contribute to the Mg(2+) site.

This sequence belongs to the RuvC family. Homodimer which binds Holliday junction (HJ) DNA. The HJ becomes 2-fold symmetrical on binding to RuvC with unstacked arms; it has a different conformation from HJ DNA in complex with RuvA. In the full resolvosome a probable DNA-RuvA(4)-RuvB(12)-RuvC(2) complex forms which resolves the HJ. It depends on Mg(2+) as a cofactor.

Its subcellular location is the cytoplasm. The enzyme catalyses Endonucleolytic cleavage at a junction such as a reciprocal single-stranded crossover between two homologous DNA duplexes (Holliday junction).. Functionally, the RuvA-RuvB-RuvC complex processes Holliday junction (HJ) DNA during genetic recombination and DNA repair. Endonuclease that resolves HJ intermediates. Cleaves cruciform DNA by making single-stranded nicks across the HJ at symmetrical positions within the homologous arms, yielding a 5'-phosphate and a 3'-hydroxyl group; requires a central core of homology in the junction. The consensus cleavage sequence is 5'-(A/T)TT(C/G)-3'. Cleavage occurs on the 3'-side of the TT dinucleotide at the point of strand exchange. HJ branch migration catalyzed by RuvA-RuvB allows RuvC to scan DNA until it finds its consensus sequence, where it cleaves and resolves the cruciform DNA. This is Crossover junction endodeoxyribonuclease RuvC from Pseudomonas fluorescens (strain SBW25).